A 201-amino-acid chain; its full sequence is FMN-dependent NADH:quinone oxidoreductase (201 aa).

FMN contacts are provided by residues S10, 16 to 18 (SQS), 96 to 99 (MYNF), and 140 to 143 (SRGG).

Belongs to the azoreductase type 1 family. As to quaternary structure, homodimer. It depends on FMN as a cofactor.

It carries out the reaction 2 a quinone + NADH + H(+) = 2 a 1,4-benzosemiquinone + NAD(+). The enzyme catalyses N,N-dimethyl-1,4-phenylenediamine + anthranilate + 2 NAD(+) = 2-(4-dimethylaminophenyl)diazenylbenzoate + 2 NADH + 2 H(+). In terms of biological role, quinone reductase that provides resistance to thiol-specific stress caused by electrophilic quinones. Its function is as follows. Also exhibits azoreductase activity. Catalyzes the reductive cleavage of the azo bond in aromatic azo compounds to the corresponding amines. In Pectobacterium atrosepticum (strain SCRI 1043 / ATCC BAA-672) (Erwinia carotovora subsp. atroseptica), this protein is FMN-dependent NADH:quinone oxidoreductase.